The following is a 372-amino-acid chain: tRNA-specific 2-thiouridylase MnmA (372 aa).

ATP is bound by residues 16–23 (GMSGGVDS) and M42. Positions 102 to 104 (NPD) are interaction with target base in tRNA. C107 functions as the Nucleophile in the catalytic mechanism. A disulfide bond links C107 and C205. G132 serves as a coordination point for ATP. Residues 155–157 (KDQ) are interaction with tRNA. C205 acts as the Cysteine persulfide intermediate in catalysis. The segment at 317–318 (RY) is interaction with tRNA.

This sequence belongs to the MnmA/TRMU family.

The protein localises to the cytoplasm. It catalyses the reaction S-sulfanyl-L-cysteinyl-[protein] + uridine(34) in tRNA + AH2 + ATP = 2-thiouridine(34) in tRNA + L-cysteinyl-[protein] + A + AMP + diphosphate + H(+). In terms of biological role, catalyzes the 2-thiolation of uridine at the wobble position (U34) of tRNA, leading to the formation of s(2)U34. This is tRNA-specific 2-thiouridylase MnmA from Shewanella sp. (strain MR-4).